The primary structure comprises 240 residues: Ribonuclease PH (240 aa).

Phosphate contacts are provided by residues arginine 87 and 125–127; that span reads GTR.

Belongs to the RNase PH family. Homohexameric ring arranged as a trimer of dimers.

The enzyme catalyses tRNA(n+1) + phosphate = tRNA(n) + a ribonucleoside 5'-diphosphate. Phosphorolytic 3'-5' exoribonuclease that plays an important role in tRNA 3'-end maturation. Removes nucleotide residues following the 3'-CCA terminus of tRNAs; can also add nucleotides to the ends of RNA molecules by using nucleoside diphosphates as substrates, but this may not be physiologically important. Probably plays a role in initiation of 16S rRNA degradation (leading to ribosome degradation) during starvation. The sequence is that of Ribonuclease PH from Pseudomonas putida (strain GB-1).